The following is a 1035-amino-acid chain: Eukaryotic translation initiation factor 3 subunit A (1035 aa).

The stretch at 92 to 121 forms a coiled coil; sequence LKKFIELAEKKVTEAQAKADEIQSSLESAA. Positions 339 to 523 constitute a PCI domain; sequence MTKAASFVLL…GVLTFDTDVF (185 aa). The stretch at 606–910 forms a coiled coil; that stretch reads ERRVIIEKKK…LRAKRAGLSE (305 aa). Composition is skewed to basic and acidic residues over residues 619–632 and 809–901; these read TDALQRKQKEEETR and KAAE…EARL. 2 disordered regions span residues 619 to 649 and 809 to 1035; these read TDALQRKQKEEETRKRIRTQQLQEAEKQRLA and KAAE…QQNQ. Composition is skewed to low complexity over residues 943–953 and 988–1004; these read KEAAGGAAPEA and PPSQRSSQPPSRTQTPP.

Belongs to the eIF-3 subunit A family. In terms of assembly, component of the eukaryotic translation initiation factor 3 (eIF-3) complex.

It is found in the cytoplasm. Its function is as follows. RNA-binding component of the eukaryotic translation initiation factor 3 (eIF-3) complex, which is involved in protein synthesis of a specialized repertoire of mRNAs and, together with other initiation factors, stimulates binding of mRNA and methionyl-tRNAi to the 40S ribosome. The eIF-3 complex specifically targets and initiates translation of a subset of mRNAs involved in cell proliferation. In Emericella nidulans (strain FGSC A4 / ATCC 38163 / CBS 112.46 / NRRL 194 / M139) (Aspergillus nidulans), this protein is Eukaryotic translation initiation factor 3 subunit A (tif32).